The primary structure comprises 331 residues: Bifunctional nuclease 1 (331 aa).

Positions 126–261 (CVQNNPRVLR…RIAYNNGLKV (136 aa)) constitute a BFN domain. The 36-residue stretch at 291–326 (EAQEFDLVRNMLVAAVEERYKDAAQYRDQLFMFRAK) folds into the UVR domain.

Belongs to the bifunctional nuclease family.

It is found in the nucleus. Its function is as follows. Bifunctional nuclease with both RNase and DNase activities. Involved in basal defense response. Participates in abscisic acid-derived callose deposition following infection by a necrotrophic pathogen. The chain is Bifunctional nuclease 1 (BBD1) from Oryza sativa subsp. indica (Rice).